The chain runs to 534 residues: MKKKISQAIIKFFKNENLIIDESKLIIEKSKNFGDYSSNVALIFAKQNKIDSLKLAQTIKNQLLSENLNLEKIEIAPPGFINFFISKNEYANIVSEIIQKGENFGRYSLQKKINLEFVSANPTGFLHLGHLRGAVIGDILANILEFSGNFVFREYYINDFGSQIDRLVGSVFSRYQQIFKKFALPEEAYLGEDIIWCAQKFFQIYANKFENSSLDDLETYKIFREKSIEIFLDEIKADLANLSIKFDVFSSESELFRTEKVQKNLANLPFVYKKEEAIWLKTSKFGDQKDRVLVKKNGEFTYFSSDIAYHFEKINSNFKPDFLINIWGADHIGYVDRMKAALKTVNLNQKLDILLYQLVKLFKNGQEFKMSKRMGKTFTIKDLLELVDQDAIRYFISERSYNSLVEFDIGLAAKISLQNPLFLIQYAHARASKLLANSTIVPEKILKFEAENETILISKLKQFEEIVLKITKNYKINLLNKYLLELANLFNSFYSNSKIIGNQNQNSLLSLTKAVQIVLKNGLKLLGIKAKERI.

The short motif at alanine 120–histidine 130 is the 'HIGH' region element.

It belongs to the class-I aminoacyl-tRNA synthetase family. As to quaternary structure, monomer.

It is found in the cytoplasm. The enzyme catalyses tRNA(Arg) + L-arginine + ATP = L-arginyl-tRNA(Arg) + AMP + diphosphate. In Mesomycoplasma hyopneumoniae (strain J / ATCC 25934 / NCTC 10110) (Mycoplasma hyopneumoniae), this protein is Arginine--tRNA ligase.